The sequence spans 420 residues: Phosphoribosylamine--glycine ligase (420 aa).

The 207-residue stretch at 108-314 folds into the ATP-grasp domain; sequence KQFMEKYAIP…FAALIAALLN (207 aa). ATP is bound at residue 134–195; the sequence is LDERGVPIVI…EDFLAGEEFS (62 aa). Positions 284 and 286 each coordinate Mg(2+).

Belongs to the GARS family. Mg(2+) is required as a cofactor. Requires Mn(2+) as cofactor.

It carries out the reaction 5-phospho-beta-D-ribosylamine + glycine + ATP = N(1)-(5-phospho-beta-D-ribosyl)glycinamide + ADP + phosphate + H(+). The protein operates within purine metabolism; IMP biosynthesis via de novo pathway; N(1)-(5-phospho-D-ribosyl)glycinamide from 5-phospho-alpha-D-ribose 1-diphosphate: step 2/2. The polypeptide is Phosphoribosylamine--glycine ligase (Listeria innocua serovar 6a (strain ATCC BAA-680 / CLIP 11262)).